The sequence spans 217 residues: Thiamine-phosphate synthase (217 aa).

Residues 39-43 and asparagine 71 each bind 4-amino-2-methyl-5-(diphosphooxymethyl)pyrimidine; that span reads QLRRK. Residues aspartate 72 and aspartate 91 each contribute to the Mg(2+) site. Serine 110 contributes to the 4-amino-2-methyl-5-(diphosphooxymethyl)pyrimidine binding site. 137-139 provides a ligand contact to 2-[(2R,5Z)-2-carboxy-4-methylthiazol-5(2H)-ylidene]ethyl phosphate; sequence SPT. Position 140 (lysine 140) interacts with 4-amino-2-methyl-5-(diphosphooxymethyl)pyrimidine. Residues glycine 173 and 193 to 194 contribute to the 2-[(2R,5Z)-2-carboxy-4-methylthiazol-5(2H)-ylidene]ethyl phosphate site; that span reads IS.

This sequence belongs to the thiamine-phosphate synthase family. The cofactor is Mg(2+).

It catalyses the reaction 2-[(2R,5Z)-2-carboxy-4-methylthiazol-5(2H)-ylidene]ethyl phosphate + 4-amino-2-methyl-5-(diphosphooxymethyl)pyrimidine + 2 H(+) = thiamine phosphate + CO2 + diphosphate. The catalysed reaction is 2-(2-carboxy-4-methylthiazol-5-yl)ethyl phosphate + 4-amino-2-methyl-5-(diphosphooxymethyl)pyrimidine + 2 H(+) = thiamine phosphate + CO2 + diphosphate. It carries out the reaction 4-methyl-5-(2-phosphooxyethyl)-thiazole + 4-amino-2-methyl-5-(diphosphooxymethyl)pyrimidine + H(+) = thiamine phosphate + diphosphate. It functions in the pathway cofactor biosynthesis; thiamine diphosphate biosynthesis; thiamine phosphate from 4-amino-2-methyl-5-diphosphomethylpyrimidine and 4-methyl-5-(2-phosphoethyl)-thiazole: step 1/1. Functionally, condenses 4-methyl-5-(beta-hydroxyethyl)thiazole monophosphate (THZ-P) and 2-methyl-4-amino-5-hydroxymethyl pyrimidine pyrophosphate (HMP-PP) to form thiamine monophosphate (TMP). The chain is Thiamine-phosphate synthase from Bordetella bronchiseptica (strain ATCC BAA-588 / NCTC 13252 / RB50) (Alcaligenes bronchisepticus).